A 288-amino-acid chain; its full sequence is 4-diphosphocytidyl-2-C-methyl-D-erythritol kinase (288 aa).

K8 is an active-site residue. Position 92–102 (92–102) interacts with ATP; the sequence is PVAAGMAGGST. The active site involves D134.

The protein belongs to the GHMP kinase family. IspE subfamily.

The catalysed reaction is 4-CDP-2-C-methyl-D-erythritol + ATP = 4-CDP-2-C-methyl-D-erythritol 2-phosphate + ADP + H(+). The protein operates within isoprenoid biosynthesis; isopentenyl diphosphate biosynthesis via DXP pathway; isopentenyl diphosphate from 1-deoxy-D-xylulose 5-phosphate: step 3/6. Catalyzes the phosphorylation of the position 2 hydroxy group of 4-diphosphocytidyl-2C-methyl-D-erythritol. In Clostridium perfringens (strain ATCC 13124 / DSM 756 / JCM 1290 / NCIMB 6125 / NCTC 8237 / Type A), this protein is 4-diphosphocytidyl-2-C-methyl-D-erythritol kinase.